A 533-amino-acid polypeptide reads, in one-letter code: MVVKPAARGMKPQGQAYKDKSKPADIRQSNINAAKAVSDAIRTSLGPRGMDKMIQAANGEVTITNDGATILKQMNVIHPAAKMLVELSRAQDVEAGDGTTSVVVVAGALLKAVEKLLQMGIHPTAISDAFQKCSAKAVDILTEMSTPIELTDRESLVKSASTSLNSKVVSQHSSQLAPIAVEAVLKVTEAGHESGVDLKNVKIIRSLGGTIDDTELVDGLVFTQRSCGVNGPKRVEKAKIGLIQFCISAPKTDMDHSVIVSDYAAMDRVLKEERAYILNIVKQIKKAGCNVLLVQKSILRDAVSDLAMHFLDKIKVMVVKDIEHEDIEFVCKTLNCRPIASLDHFLPEHLVNADLVEEVSSGSSKFVKVTGIQNMGQTVSIVVRGSNKLVLEEAERSLHDALCVVRCLVKKRAQIAGGGAPEIEMAIQLAAHAQTLEGVDAYCFRAFANALEVIPSTLAENAGLNPIATVTELRNRHAQGEKNAGINVRKGAITDILAENVVQPLLVSTSSITLASETVRSILKIDDIINTMQ.

The disordered stretch occupies residues 1–24; that stretch reads MVVKPAARGMKPQGQAYKDKSKPA.

It belongs to the TCP-1 chaperonin family. As to quaternary structure, heterooligomeric complex of about 850 to 900 kDa that forms two stacked rings, 12 to 16 nm in diameter.

The protein localises to the cytoplasm. In terms of biological role, molecular chaperone; assists the folding of proteins upon ATP hydrolysis. Known to play a role, in vitro, in the folding of actin and tubulin. This chain is T-complex protein 1 subunit delta, found in Ochlerotatus triseriatus (Eastern treehole mosquito).